A 122-amino-acid polypeptide reads, in one-letter code: Putative TLX1 neighbor protein (122 aa).

The segment at 21-122 (SLLSQEAMGP…LGGGRGQRGQ (102 aa)) is disordered. Residues 113-122 (LGGGRGQRGQ) are compositionally biased toward gly residues.

This is Putative TLX1 neighbor protein (TLX1NB) from Homo sapiens (Human).